The chain runs to 193 residues: Probable DNA-directed RNA polymerase subunit delta (193 aa).

Residues 14 to 83 (LSMIEVARAI…GENKWGLRSW (70 aa)) enclose the HTH HARE-type domain. 2 stretches are compositionally biased toward acidic residues: residues 117 to 134 (GDDDAIDYGHDDPEDEDN) and 142 to 193 (EYDD…VVDE). The tract at residues 117 to 193 (GDDDAIDYGH…EYSDEEVVDE (77 aa)) is disordered.

Belongs to the RpoE family. RNAP is composed of a core of 2 alpha, a beta and a beta' subunits. The core is associated with a delta subunit and one of several sigma factors.

Functionally, participates in both the initiation and recycling phases of transcription. In the presence of the delta subunit, RNAP displays an increased specificity of transcription, a decreased affinity for nucleic acids, and an increased efficiency of RNA synthesis because of enhanced recycling. The protein is Probable DNA-directed RNA polymerase subunit delta of Streptococcus suis (strain 05ZYH33).